Reading from the N-terminus, the 275-residue chain is Elongation factor Ts (275 aa).

An Isoglutamyl lysine isopeptide (Lys-Gln) (interchain with Q-Cter in protein Pup) cross-link involves residue K36. Positions 76–79 (TDFV) are involved in Mg(2+) ion dislocation from EF-Tu.

This sequence belongs to the EF-Ts family.

Its subcellular location is the cytoplasm. In terms of biological role, associates with the EF-Tu.GDP complex and induces the exchange of GDP to GTP. It remains bound to the aminoacyl-tRNA.EF-Tu.GTP complex up to the GTP hydrolysis stage on the ribosome. This Mycolicibacterium smegmatis (strain ATCC 700084 / mc(2)155) (Mycobacterium smegmatis) protein is Elongation factor Ts.